A 207-amino-acid chain; its full sequence is Large ribosomal subunit protein uL4 (207 aa).

This sequence belongs to the universal ribosomal protein uL4 family. Part of the 50S ribosomal subunit.

One of the primary rRNA binding proteins, this protein initially binds near the 5'-end of the 23S rRNA. It is important during the early stages of 50S assembly. It makes multiple contacts with different domains of the 23S rRNA in the assembled 50S subunit and ribosome. In terms of biological role, forms part of the polypeptide exit tunnel. The polypeptide is Large ribosomal subunit protein uL4 (Erythrobacter litoralis (strain HTCC2594)).